The sequence spans 434 residues: GTPase Obg (434 aa).

An Obg domain is found at 1–158 (MFIDRAKIYV…RWLYLELKLL (158 aa)). The region spanning 159–328 (ADVGLLGLPN…LLELMEKYVK (170 aa)) is the OBG-type G domain. Residues 165 to 172 (GLPNAGKS), 190 to 194 (FTTKT), 211 to 214 (DIPG), 280 to 283 (NKID), and 309 to 311 (SAK) contribute to the GTP site. Residues S172 and T192 each coordinate Mg(2+). In terms of domain architecture, OCT spans 347 to 425 (KQENKKQEIP…IGNYVFKYNS (79 aa)).

This sequence belongs to the TRAFAC class OBG-HflX-like GTPase superfamily. OBG GTPase family. Monomer. Mg(2+) is required as a cofactor.

Its subcellular location is the cytoplasm. In terms of biological role, an essential GTPase which binds GTP, GDP and possibly (p)ppGpp with moderate affinity, with high nucleotide exchange rates and a fairly low GTP hydrolysis rate. Plays a role in control of the cell cycle, stress response, ribosome biogenesis and in those bacteria that undergo differentiation, in morphogenesis control. The chain is GTPase Obg from Dictyoglomus turgidum (strain DSM 6724 / Z-1310).